Consider the following 355-residue polypeptide: Beta-1,2-mannobiose phosphorylase (355 aa).

Residues asparagine 31, arginine 46, arginine 89, 140–141, lysine 188, tyrosine 273, and aspartate 333 contribute to the beta-D-Manp-(1-&gt;2)-beta-D-Manp-(1-&gt;2)-D-Manp site; that span reads ED.

It belongs to the glycosyl hydrolase 130 family. In terms of assembly, homodimer.

It catalyses the reaction beta-D-mannopyranosyl-(1-&gt;2)-D-mannopyranose + phosphate = alpha-D-mannose 1-phosphate + D-mannose. Its function is as follows. Catalyzes the reversible phosphorolysis of 1,2-beta-oligomannan. In phosphorolytic reactions, prefers beta-1,2-mannobiose (beta-1,2-Man2) as substrate, but can also use beta-1,2-mannotriose. This chain is Beta-1,2-mannobiose phosphorylase, found in Listeria innocua serovar 6a (strain ATCC BAA-680 / CLIP 11262).